The sequence spans 130 residues: Small ribosomal subunit protein uS8 (130 aa).

The protein belongs to the universal ribosomal protein uS8 family. In terms of assembly, part of the 30S ribosomal subunit. Contacts proteins S5 and S12.

One of the primary rRNA binding proteins, it binds directly to 16S rRNA central domain where it helps coordinate assembly of the platform of the 30S subunit. This chain is Small ribosomal subunit protein uS8, found in Pasteurella multocida (strain Pm70).